The sequence spans 987 residues: Probable outer membrane protein PmpG (987 aa).

The first 25 residues, 1 to 25 (MMQTPFHKFFLLAMLSYSLLQGGHA), serve as a signal peptide directing secretion. Positions 707–987 (GRAYCRGIWI…GLSIGSKIRF (281 aa)) constitute an Autotransporter domain.

It belongs to the PMP outer membrane protein family.

The protein localises to the secreted. It localises to the cell wall. The protein resides in the cell outer membrane. This Chlamydia muridarum (strain MoPn / Nigg) protein is Probable outer membrane protein PmpG (pmpG).